An 814-amino-acid polypeptide reads, in one-letter code: Probable G-protein coupled receptor 156 (814 aa).

Topologically, residues 1–47 are extracellular; it reads MEPEINCSELCDSFPGQELDRRPLHDLCKTTITSSHHSSKTISSLSP. Residue asparagine 6 is glycosylated (N-linked (GlcNAc...) asparagine). A helical membrane pass occupies residues 48–68; sequence VLLGIVWTFLSCGLLLILFFL. Residues 69 to 86 are Cytoplasmic-facing; sequence AFTIHCRKNRIVKMSSPN. The helical transmembrane segment at 87 to 107 threads the bilayer; the sequence is LNIVTLLGSCLTYSSAYLFGI. Residues 108-118 lie on the Extracellular side of the membrane; sequence QDVLVGSSMET. A helical transmembrane segment spans residues 119–139; the sequence is LIQTRLSMLCIGTSLVFGPIL. Residues 140-164 lie on the Cytoplasmic side of the membrane; sequence GKSWRLYKVFTQRVPDKRVIIKDLQ. The helical transmembrane segment at 165–185 threads the bilayer; the sequence is LLGLVAALLMADVILLMTWVL. Topologically, residues 186–222 are extracellular; the sequence is TDPIQCLQILSVSMTVTGKDVSCTSTSTHFCASRYSD. The helical transmembrane segment at 223-243 threads the bilayer; that stretch reads VWIALIWGCKGLLLLYGAYLA. Residues 244-257 lie on the Cytoplasmic side of the membrane; sequence GLTGHVSSPPVNQS. A helical transmembrane segment spans residues 258-278; it reads LTIMVGVNLLVLAAGLLFVVT. At 279 to 288 the chain is on the extracellular side; sequence RYLHSWPNLV. Residues 289–309 form a helical membrane-spanning segment; sequence FGLTSGGIFVCTTTINCFIFI. The Cytoplasmic segment spans residues 310–814; the sequence is PQLKQWKAFE…FKDDLKPTLV (505 aa). The stretch at 354 to 390 forms a coiled coil; the sequence is EKSSMERLLTEKNAVIESLQEQVNNAKEKIVRLMSAE. 3 disordered regions span residues 422–545, 557–724, and 769–792; these read AQGP…SSVI, GLGP…PEQW, and SSSD…LASW. Positions 443-454 are enriched in polar residues; the sequence is SQCTSGPSSYAQ. Residues 468 to 484 show a composition bias toward basic and acidic residues; that stretch reads GKEEKISDSKDFSDHLD. A compositionally biased stretch (polar residues) spans 486–496; it reads GCSQKPWTEQS. Over residues 523–545 the composition is skewed to basic and acidic residues; it reads QRQRHLENSEEPPERRSRVSSVI. Residues 563-581 are compositionally biased toward polar residues; sequence SLSTAPSCHQQTWKNSAAF. Basic residues predominate over residues 599-610; sequence VRRRRAAQRARS. Residues 639 to 651 are compositionally biased toward polar residues; that stretch reads NGDSPSLAPQTTD. A compositionally biased stretch (low complexity) spans 769–780; it reads SSSDSSDSGTSD.

It belongs to the G-protein coupled receptor 3 family. GABA-B receptor subfamily. As to expression, ubiquitous expression both in the CNS and in peripheral tissues. Very high expression in fetal brain and testis relative to expression in other tissues.

The protein resides in the cell membrane. In terms of biological role, orphan G-protein coupled receptor involved in the regulation of hair cell orientation in mechanosensory organs of the inner ear. It is required to trigger a 180 degree reversal in hair cell orientation, creating a virtual line of polarity reversal (LPR) across which stereociliary bundles are arranged in opposite orientations. The protein is Probable G-protein coupled receptor 156 (GPR156) of Homo sapiens (Human).